Reading from the N-terminus, the 443-residue chain is Proline--tRNA ligase (443 aa).

It belongs to the class-II aminoacyl-tRNA synthetase family. ProS type 2 subfamily. In terms of assembly, homodimer.

It localises to the cytoplasm. It catalyses the reaction tRNA(Pro) + L-proline + ATP = L-prolyl-tRNA(Pro) + AMP + diphosphate. Functionally, catalyzes the attachment of proline to tRNA(Pro) in a two-step reaction: proline is first activated by ATP to form Pro-AMP and then transferred to the acceptor end of tRNA(Pro). The protein is Proline--tRNA ligase of Methylobacterium nodulans (strain LMG 21967 / CNCM I-2342 / ORS 2060).